The following is a 225-amino-acid chain: Small ribosomal subunit protein uS7 (225 aa).

Position 2 is an N-acetylserine (Ser-2). Thr-27 carries the post-translational modification Phosphothreonine. Residues Lys-45 and Lys-203 each participate in a glycyl lysine isopeptide (Lys-Gly) (interchain with G-Cter in ubiquitin) cross-link.

This sequence belongs to the universal ribosomal protein uS7 family. Component of the small ribosomal subunit (SSU). Mature yeast ribosomes consist of a small (40S) and a large (60S) subunit. The 40S small subunit contains 1 molecule of ribosomal RNA (18S rRNA) and 33 different proteins (encoded by 57 genes). The large 60S subunit contains 3 rRNA molecules (25S, 5.8S and 5S rRNA) and 46 different proteins (encoded by 81 genes). N-terminally acetylated by acetyltransferase NatA.

The protein localises to the cytoplasm. Its function is as follows. Component of the ribosome, a large ribonucleoprotein complex responsible for the synthesis of proteins in the cell. The small ribosomal subunit (SSU) binds messenger RNAs (mRNAs) and translates the encoded message by selecting cognate aminoacyl-transfer RNA (tRNA) molecules. The large subunit (LSU) contains the ribosomal catalytic site termed the peptidyl transferase center (PTC), which catalyzes the formation of peptide bonds, thereby polymerizing the amino acids delivered by tRNAs into a polypeptide chain. The nascent polypeptides leave the ribosome through a tunnel in the LSU and interact with protein factors that function in enzymatic processing, targeting, and the membrane insertion of nascent chains at the exit of the ribosomal tunnel. The polypeptide is Small ribosomal subunit protein uS7 (Saccharomyces cerevisiae (strain ATCC 204508 / S288c) (Baker's yeast)).